The following is a 349-amino-acid chain: 4-hydroxy-3-methylbut-2-en-1-yl diphosphate synthase (flavodoxin) (349 aa).

[4Fe-4S] cluster is bound by residues Cys-264, Cys-267, Cys-299, and Glu-306.

Belongs to the IspG family. The cofactor is [4Fe-4S] cluster.

The enzyme catalyses (2E)-4-hydroxy-3-methylbut-2-enyl diphosphate + oxidized [flavodoxin] + H2O + 2 H(+) = 2-C-methyl-D-erythritol 2,4-cyclic diphosphate + reduced [flavodoxin]. Its pathway is isoprenoid biosynthesis; isopentenyl diphosphate biosynthesis via DXP pathway; isopentenyl diphosphate from 1-deoxy-D-xylulose 5-phosphate: step 5/6. Converts 2C-methyl-D-erythritol 2,4-cyclodiphosphate (ME-2,4cPP) into 1-hydroxy-2-methyl-2-(E)-butenyl 4-diphosphate. The sequence is that of 4-hydroxy-3-methylbut-2-en-1-yl diphosphate synthase (flavodoxin) from Clostridium perfringens (strain 13 / Type A).